The following is a 137-amino-acid chain: Large-conductance mechanosensitive channel (137 aa).

A run of 2 helical transmembrane segments spans residues 10 to 30 (FAMR…AAFG) and 76 to 96 (GVFL…FMAI).

It belongs to the MscL family. As to quaternary structure, homopentamer.

Its subcellular location is the cell inner membrane. Channel that opens in response to stretch forces in the membrane lipid bilayer. May participate in the regulation of osmotic pressure changes within the cell. In Erwinia tasmaniensis (strain DSM 17950 / CFBP 7177 / CIP 109463 / NCPPB 4357 / Et1/99), this protein is Large-conductance mechanosensitive channel.